The sequence spans 250 residues: Endonuclease NucS 2 (250 aa).

Belongs to the NucS endonuclease family.

Its subcellular location is the cytoplasm. Its function is as follows. Cleaves both 3' and 5' ssDNA extremities of branched DNA structures. This is Endonuclease NucS 2 from Halobacterium salinarum (strain ATCC 700922 / JCM 11081 / NRC-1) (Halobacterium halobium).